The following is a 397-amino-acid chain: Enoyl-[acyl-carrier-protein] reductase [NADH] (397 aa).

NAD(+) contacts are provided by residues 48 to 53 (GASTGY), 74 to 75 (FE), 111 to 112 (DA), and 139 to 140 (VA). Tyr225 provides a ligand contact to substrate. The active-site Proton donor is the Tyr235. NAD(+)-binding positions include Lys244 and 273–275 (VVT).

This sequence belongs to the TER reductase family. In terms of assembly, monomer.

The catalysed reaction is a 2,3-saturated acyl-[ACP] + NAD(+) = a (2E)-enoyl-[ACP] + NADH + H(+). Its pathway is lipid metabolism; fatty acid biosynthesis. In terms of biological role, involved in the final reduction of the elongation cycle of fatty acid synthesis (FAS II). Catalyzes the reduction of a carbon-carbon double bond in an enoyl moiety that is covalently linked to an acyl carrier protein (ACP). The chain is Enoyl-[acyl-carrier-protein] reductase [NADH] from Burkholderia mallei (strain SAVP1).